Reading from the N-terminus, the 420-residue chain is uncharacterized protein (420 aa).

Disordered stretches follow at residues 84-103 (RSQANSESTPPEHTWSGTSE) and 122-211 (SMNN…NKKS). The span at 85–103 (SQANSESTPPEHTWSGTSE) shows a compositional bias: polar residues. The segment covering 184-199 (SMTDQEVEQRRKEANK) has biased composition (basic and acidic residues). Coiled coils occupy residues 265–310 (TEKE…TATN) and 345–374 (LQFKIKKFERREKLLEEVENQIKQYFNFKE). Positions 399–408 (KTSSPKTSIA) are enriched in polar residues. The interval 399-420 (KTSSPKTSIAGSHRRSTRSSEN) is disordered. Residues 410-420 (SHRRSTRSSEN) are compositionally biased toward basic residues.

This is an uncharacterized protein from Caenorhabditis elegans.